The primary structure comprises 399 residues: Tryptophan synthase beta chain (399 aa).

Position 92 is an N6-(pyridoxal phosphate)lysine (K92).

Belongs to the TrpB family. As to quaternary structure, tetramer of two alpha and two beta chains. The cofactor is pyridoxal 5'-phosphate.

It carries out the reaction (1S,2R)-1-C-(indol-3-yl)glycerol 3-phosphate + L-serine = D-glyceraldehyde 3-phosphate + L-tryptophan + H2O. Its pathway is amino-acid biosynthesis; L-tryptophan biosynthesis; L-tryptophan from chorismate: step 5/5. In terms of biological role, the beta subunit is responsible for the synthesis of L-tryptophan from indole and L-serine. The sequence is that of Tryptophan synthase beta chain from Legionella pneumophila (strain Paris).